The primary structure comprises 513 residues: Probable cytosol aminopeptidase (513 aa).

Lys-275 and Asp-280 together coordinate Mn(2+). Lys-287 is a catalytic residue. Mn(2+)-binding residues include Asp-298, Asp-357, and Glu-359. Arg-361 is an active-site residue.

It belongs to the peptidase M17 family. Requires Mn(2+) as cofactor.

The protein localises to the cytoplasm. The catalysed reaction is Release of an N-terminal amino acid, Xaa-|-Yaa-, in which Xaa is preferably Leu, but may be other amino acids including Pro although not Arg or Lys, and Yaa may be Pro. Amino acid amides and methyl esters are also readily hydrolyzed, but rates on arylamides are exceedingly low.. It carries out the reaction Release of an N-terminal amino acid, preferentially leucine, but not glutamic or aspartic acids.. Its function is as follows. Presumably involved in the processing and regular turnover of intracellular proteins. Catalyzes the removal of unsubstituted N-terminal amino acids from various peptides. In Streptomyces avermitilis (strain ATCC 31267 / DSM 46492 / JCM 5070 / NBRC 14893 / NCIMB 12804 / NRRL 8165 / MA-4680), this protein is Probable cytosol aminopeptidase.